We begin with the raw amino-acid sequence, 197 residues long: Transcription factor FapR (197 aa).

The protein belongs to the FapR family.

Functionally, transcriptional factor involved in regulation of membrane lipid biosynthesis by repressing genes involved in fatty acid and phospholipid metabolism. The protein is Transcription factor FapR of Bacillus cytotoxicus (strain DSM 22905 / CIP 110041 / 391-98 / NVH 391-98).